A 74-amino-acid polypeptide reads, in one-letter code: Sec-independent protein translocase protein TatA (74 aa).

A helical membrane pass occupies residues 1–21 (MGGISIWQLLIIVAIVVLLFG). The tract at residues 45–74 (EEPKDAEFKSLDKAENTAQTKKEEKEKEQA) is disordered.

It belongs to the TatA/E family. The Tat system comprises two distinct complexes: a TatABC complex, containing multiple copies of TatA, TatB and TatC subunits, and a separate TatA complex, containing only TatA subunits. Substrates initially bind to the TatABC complex, which probably triggers association of the separate TatA complex to form the active translocon.

It localises to the cell inner membrane. Part of the twin-arginine translocation (Tat) system that transports large folded proteins containing a characteristic twin-arginine motif in their signal peptide across membranes. TatA could form the protein-conducting channel of the Tat system. The polypeptide is Sec-independent protein translocase protein TatA (Actinobacillus succinogenes (strain ATCC 55618 / DSM 22257 / CCUG 43843 / 130Z)).